Consider the following 660-residue polypeptide: Bifunctional polymyxin resistance protein ArnA (660 aa).

The formyltransferase ArnAFT stretch occupies residues 1–304 (MKAVIFAYHD…TLGLVAGARL (304 aa)). His-104 (proton donor; for formyltransferase activity) is an active-site residue. Residues Arg-114 and 136-140 (VKRAD) contribute to the (6R)-10-formyltetrahydrofolate site. The segment at 314-660 (RRIRVLILGV…RSVDVAERAS (347 aa)) is dehydrogenase ArnADH. NAD(+) contacts are provided by residues Asp-347 and 368 to 369 (DI). Residues Ala-393, Tyr-398, and 432-433 (TS) each bind UDP-alpha-D-glucuronate. Catalysis depends on Glu-434, which acts as the Proton acceptor; for decarboxylase activity. UDP-alpha-D-glucuronate is bound by residues Arg-460, Asn-492, 526 to 535 (KLIDGGQQKR), and Tyr-613. Residue Arg-619 is the Proton donor; for decarboxylase activity of the active site.

The protein in the N-terminal section; belongs to the Fmt family. UDP-L-Ara4N formyltransferase subfamily. In the C-terminal section; belongs to the NAD(P)-dependent epimerase/dehydratase family. UDP-glucuronic acid decarboxylase subfamily. In terms of assembly, homohexamer, formed by a dimer of trimers.

The catalysed reaction is UDP-alpha-D-glucuronate + NAD(+) = UDP-beta-L-threo-pentopyranos-4-ulose + CO2 + NADH. The enzyme catalyses UDP-4-amino-4-deoxy-beta-L-arabinose + (6R)-10-formyltetrahydrofolate = UDP-4-deoxy-4-formamido-beta-L-arabinose + (6S)-5,6,7,8-tetrahydrofolate + H(+). The protein operates within nucleotide-sugar biosynthesis; UDP-4-deoxy-4-formamido-beta-L-arabinose biosynthesis; UDP-4-deoxy-4-formamido-beta-L-arabinose from UDP-alpha-D-glucuronate: step 1/3. Its pathway is nucleotide-sugar biosynthesis; UDP-4-deoxy-4-formamido-beta-L-arabinose biosynthesis; UDP-4-deoxy-4-formamido-beta-L-arabinose from UDP-alpha-D-glucuronate: step 3/3. It participates in bacterial outer membrane biogenesis; lipopolysaccharide biosynthesis. In terms of biological role, bifunctional enzyme that catalyzes the oxidative decarboxylation of UDP-glucuronic acid (UDP-GlcUA) to UDP-4-keto-arabinose (UDP-Ara4O) and the addition of a formyl group to UDP-4-amino-4-deoxy-L-arabinose (UDP-L-Ara4N) to form UDP-L-4-formamido-arabinose (UDP-L-Ara4FN). The modified arabinose is attached to lipid A and is required for resistance to polymyxin and cationic antimicrobial peptides. The sequence is that of Bifunctional polymyxin resistance protein ArnA from Salmonella choleraesuis (strain SC-B67).